The primary structure comprises 61 residues: Photosystem II reaction center protein K (61 aa).

Residues 1–24 (MLNIFNLVCICIHSVLYSSSFFSA) constitute a propeptide that is removed on maturation. Residues 36 to 56 (IVDIMPVIPLLFFLLAFVWQA) traverse the membrane as a helical segment.

It belongs to the PsbK family. In terms of assembly, PSII is composed of 1 copy each of membrane proteins PsbA, PsbB, PsbC, PsbD, PsbE, PsbF, PsbH, PsbI, PsbJ, PsbK, PsbL, PsbM, PsbT, PsbX, PsbY, PsbZ, Psb30/Ycf12, at least 3 peripheral proteins of the oxygen-evolving complex and a large number of cofactors. It forms dimeric complexes.

The protein resides in the plastid. The protein localises to the chloroplast thylakoid membrane. Its function is as follows. One of the components of the core complex of photosystem II (PSII). PSII is a light-driven water:plastoquinone oxidoreductase that uses light energy to abstract electrons from H(2)O, generating O(2) and a proton gradient subsequently used for ATP formation. It consists of a core antenna complex that captures photons, and an electron transfer chain that converts photonic excitation into a charge separation. The sequence is that of Photosystem II reaction center protein K from Glycine max (Soybean).